We begin with the raw amino-acid sequence, 175 residues long: MDKEKLAKLQSQVRIGGKGTPRRKVVKKSVTSSQGDDRKLQAALKKLGVQPITGVEEVNMFKEDGNVLHFGAPRVQVHAALPSNTLAIYGPGQTKELTELVPGILNQLGPDSLANLRRLAESYQSLTARQAAAAAGSGGEGAGEAKEGEGDDEIPDLVDNFDEAEVKKSDLEELE.

Disordered stretches follow at residues 1–36 and 129–175; these read MDKE…SQGD and RQAA…EELE. One can recognise an NAC-A/B domain in the interval 34 to 101; the sequence is QGDDRKLQAA…GQTKELTELV (68 aa). The segment covering 149–163 has biased composition (acidic residues); sequence EGDDEIPDLVDNFDE. The segment covering 164–175 has biased composition (basic and acidic residues); sequence AEVKKSDLEELE.

The protein belongs to the NAC-beta family. In terms of assembly, part of the nascent polypeptide-associated complex (NAC), consisting of EGD2 and EGD1. NAC associates with ribosomes via EGD1.

The protein localises to the cytoplasm. Its subcellular location is the nucleus. Component of the nascent polypeptide-associated complex (NAC), a dynamic component of the ribosomal exit tunnel, protecting the emerging polypeptides from interaction with other cytoplasmic proteins to ensure appropriate nascent protein targeting. The NAC complex also promotes mitochondrial protein import by enhancing productive ribosome interactions with the outer mitochondrial membrane and blocks the inappropriate interaction of ribosomes translating non-secretory nascent polypeptides with translocation sites in the membrane of the endoplasmic reticulum. EGD1 may act as a transcription factor that exert a negative effect on the expression of several genes that are transcribed by RNA polymerase II. The chain is Nascent polypeptide-associated complex subunit beta (EGD1) from Cryptococcus neoformans var. neoformans serotype D (strain B-3501A) (Filobasidiella neoformans).